A 330-amino-acid polypeptide reads, in one-letter code: Phenylalanine--tRNA ligase alpha subunit (330 aa).

Glu257 lines the Mg(2+) pocket.

The protein belongs to the class-II aminoacyl-tRNA synthetase family. Phe-tRNA synthetase alpha subunit type 1 subfamily. Tetramer of two alpha and two beta subunits. Mg(2+) is required as a cofactor.

Its subcellular location is the cytoplasm. The catalysed reaction is tRNA(Phe) + L-phenylalanine + ATP = L-phenylalanyl-tRNA(Phe) + AMP + diphosphate + H(+). The chain is Phenylalanine--tRNA ligase alpha subunit from Nostoc sp. (strain PCC 7120 / SAG 25.82 / UTEX 2576).